A 147-amino-acid polypeptide reads, in one-letter code: Hemoglobin subunit beta-1 (147 aa).

The Globin domain maps to 3 to 147 (EWTATERTHI…VVSALGRQYH (145 aa)). Residues His-64 and His-93 each contribute to the heme b site.

Belongs to the globin family. As to quaternary structure, hb 1 is a heterotetramer of two alpha-1 and two beta-1 chains. Hb 2 is a heterotetramer of two alpha-2 and two beta-1 chains. As to expression, red blood cells.

Its function is as follows. Involved in oxygen transport from gills to the various peripheral tissues. This is Hemoglobin subunit beta-1 (hbb1) from Boreogadus saida (Polar cod).